The following is a 335-amino-acid chain: Ketol-acid reductoisomerase (NAD(P)(+)) (335 aa).

Residues 5–185 (AKIYTDKDTT…GGTRAGAIET (181 aa)) enclose the KARI N-terminal Rossmann domain. NADP(+) contacts are provided by residues 28–31 (YGSQ), Arg-52, Ser-56, and 86–89 (DMAQ). Residue His-111 is part of the active site. Gly-137 provides a ligand contact to NADP(+). Residues 186-331 (TFKEETETDL…RRLKEIIERG (146 aa)) enclose the KARI C-terminal knotted domain. Residues Asp-194, Glu-198, Glu-230, and Glu-234 each coordinate Mg(2+). Residue Ser-255 participates in substrate binding. Positions 301–335 (GSPTLSKGLEEMDKSLEEQTGRRLKEIIERGRPKS) are disordered. The segment covering 308-335 (GLEEMDKSLEEQTGRRLKEIIERGRPKS) has biased composition (basic and acidic residues).

Belongs to the ketol-acid reductoisomerase family. Mg(2+) serves as cofactor.

It catalyses the reaction (2R)-2,3-dihydroxy-3-methylbutanoate + NAD(+) = (2S)-2-acetolactate + NADH + H(+). It carries out the reaction (2R)-2,3-dihydroxy-3-methylbutanoate + NADP(+) = (2S)-2-acetolactate + NADPH + H(+). The protein operates within amino-acid biosynthesis; L-isoleucine biosynthesis; L-isoleucine from 2-oxobutanoate: step 2/4. It functions in the pathway amino-acid biosynthesis; L-valine biosynthesis; L-valine from pyruvate: step 2/4. Its function is as follows. Involved in the biosynthesis of branched-chain amino acids (BCAA). Catalyzes an alkyl-migration followed by a ketol-acid reduction of (S)-2-acetolactate (S2AL) to yield (R)-2,3-dihydroxy-isovalerate. In the isomerase reaction, S2AL is rearranged via a Mg-dependent methyl migration to produce 3-hydroxy-3-methyl-2-ketobutyrate (HMKB). In the reductase reaction, this 2-ketoacid undergoes a metal-dependent reduction by NADPH or NADH to yield (R)-2,3-dihydroxy-isovalerate. In Metallosphaera sedula (strain ATCC 51363 / DSM 5348 / JCM 9185 / NBRC 15509 / TH2), this protein is Ketol-acid reductoisomerase (NAD(P)(+)).